Reading from the N-terminus, the 100-residue chain is NADH-quinone oxidoreductase subunit K (100 aa).

A run of 3 helical transmembrane segments spans residues 1 to 21 (MIGL…GLAG), 28 to 48 (ILLL…GFVA), and 64 to 84 (FIIS…ILWF).

The protein belongs to the complex I subunit 4L family. In terms of assembly, NDH-1 is composed of 14 different subunits. Subunits NuoA, H, J, K, L, M, N constitute the membrane sector of the complex.

It is found in the cell inner membrane. It catalyses the reaction a quinone + NADH + 5 H(+)(in) = a quinol + NAD(+) + 4 H(+)(out). Functionally, NDH-1 shuttles electrons from NADH, via FMN and iron-sulfur (Fe-S) centers, to quinones in the respiratory chain. The immediate electron acceptor for the enzyme in this species is believed to be ubiquinone. Couples the redox reaction to proton translocation (for every two electrons transferred, four hydrogen ions are translocated across the cytoplasmic membrane), and thus conserves the redox energy in a proton gradient. The protein is NADH-quinone oxidoreductase subunit K of Helicobacter pylori (strain ATCC 700392 / 26695) (Campylobacter pylori).